The chain runs to 396 residues: Elongation factor Tu 1 (396 aa).

A tr-type G domain is found at 10-206; sequence KPHVNVGTIG…QIDSYIPEPE (197 aa). The tract at residues 19–26 is G1; it reads GHIDHGKT. 19-26 lines the GTP pocket; it reads GHIDHGKT. Threonine 26 is a binding site for Mg(2+). The G2 stretch occupies residues 60 to 64; it reads GITIA. The interval 81–84 is G3; sequence DCPG. Residues 81 to 85 and 136 to 139 each bind GTP; these read DCPGH and NKCD. Positions 136-139 are G4; it reads NKCD. The segment at 174-176 is G5; sequence SAL.

It belongs to the TRAFAC class translation factor GTPase superfamily. Classic translation factor GTPase family. EF-Tu/EF-1A subfamily. Monomer.

Its subcellular location is the cytoplasm. It catalyses the reaction GTP + H2O = GDP + phosphate + H(+). Functionally, GTP hydrolase that promotes the GTP-dependent binding of aminoacyl-tRNA to the A-site of ribosomes during protein biosynthesis. In Desulfotalea psychrophila (strain LSv54 / DSM 12343), this protein is Elongation factor Tu 1.